Reading from the N-terminus, the 245-residue chain is Ribosome maturation factor RimP (245 aa).

It belongs to the RimP family.

The protein localises to the cytoplasm. Required for maturation of 30S ribosomal subunits. The protein is Ribosome maturation factor RimP of Verminephrobacter eiseniae (strain EF01-2).